Reading from the N-terminus, the 317-residue chain is Mitochondrial outer membrane protein porin 4 (317 aa).

The segment at 1-30 (MEAETECKVPGVYSETGIPVEDPAPGLNSD) is disordered.

This sequence belongs to the eukaryotic mitochondrial porin (TC 1.B.8.1) family.

Its subcellular location is the mitochondrion outer membrane. In terms of biological role, forms a channel through the mitochondrial outer membrane that allows diffusion of small hydrophilic molecules. The channel adopts an open conformation at low or zero membrane potential and a closed conformation at potentials above 30-40 mV. The open state has a weak anion selectivity whereas the closed state is cation-selective. This Oryza sativa subsp. japonica (Rice) protein is Mitochondrial outer membrane protein porin 4 (VDAC4).